The sequence spans 354 residues: tRNase Z TRZ2, chloroplastic (354 aa).

Residues 1–21 are disordered; sequence MQLSSSFPISPPKIFPSTKHH. Residues 1–68 constitute a chloroplast transit peptide; it reads MQLSSSFPIS…EEEEEYRKAR (68 aa).

This sequence belongs to the RNase Z family. As to quaternary structure, homodimer. The cofactor is Zn(2+). It depends on Ca(2+) as a cofactor. Mn(2+) is required as a cofactor. Mg(2+) serves as cofactor. Highly expressed in green and actively dividing tissues.

The protein localises to the plastid. Its subcellular location is the chloroplast. It carries out the reaction Endonucleolytic cleavage of RNA, removing extra 3' nucleotides from tRNA precursor, generating 3' termini of tRNAs. A 3'-hydroxy group is left at the tRNA terminus and a 5'-phosphoryl group is left at the trailer molecule.. Its function is as follows. Zinc phosphodiesterase, which displays tRNA 3'-processing endonuclease activity. Involved in tRNA maturation, by removing a 3'-trailer from precursor tRNA. This is tRNase Z TRZ2, chloroplastic from Arabidopsis thaliana (Mouse-ear cress).